A 172-amino-acid polypeptide reads, in one-letter code: Large ribosomal subunit protein uL16 (172 aa).

This sequence belongs to the universal ribosomal protein uL16 family.

The sequence is that of Large ribosomal subunit protein uL16 from Methanocella arvoryzae (strain DSM 22066 / NBRC 105507 / MRE50).